Here is a 541-residue protein sequence, read N- to C-terminus: MPKLIAFNEEARRGLERGMNTLADAVKVTLGPKGRNVVLEKKWGAPTITNDGVSIAKEIELEDPYEKIGAELVKEVAKKTDDVAGDGTTTATVLAQAMVREGLRNVAAGANPMGLKRGIEAAVEAVSGQLLSMAKDVETKEQIASTASISAADTTVGEIIAEAMDKVGKEGVITVEESNTFGLDLELTEGMRFDKGYISAYFVTDPERMETVLEDPYVLIANQKISSVKDLLPLLEKVMQSGKPLLILAEDVDGEALSTLVVNKIRGTFKSVAVKAPGFGDRRKAMLQDIAILTGGQVISEEVGLKLESTGIELLGQARKVVITKDETTIVEGAGDADQIAGRVNQIRAEIEKSDSDYDREKLQERLAKLAGGVAVIKVGAATEVELKERKHRIEDAVRNAKAAVEEGIVAGGGVALVQAANAAFDKLDLTGDEAVGAQIVRFATDAPLKQIAINAGLEGGVVAEKVRGLTAGHGLNAATGEYVDMIASGIIDPAKVTRSALQNAASIAALFLTTEAVVADKPEKAAPMGDPSGGMGGMDF.

Residues 29 to 32 (TLGP), 86 to 90 (DGTTT), G413, 477 to 479 (NAA), and D493 each bind ATP.

Belongs to the chaperonin (HSP60) family. Forms a cylinder of 14 subunits composed of two heptameric rings stacked back-to-back. Interacts with the co-chaperonin GroES.

It localises to the cytoplasm. It carries out the reaction ATP + H2O + a folded polypeptide = ADP + phosphate + an unfolded polypeptide.. In terms of biological role, together with its co-chaperonin GroES, plays an essential role in assisting protein folding. The GroEL-GroES system forms a nano-cage that allows encapsulation of the non-native substrate proteins and provides a physical environment optimized to promote and accelerate protein folding. This chain is Chaperonin GroEL 2, found in Nocardioides sp. (strain ATCC BAA-499 / JS614).